A 301-amino-acid chain; its full sequence is Epimerase family protein Mb2239 (301 aa).

Belongs to the NAD(P)-dependent epimerase/dehydratase family. SDR39U1 subfamily.

This is Epimerase family protein Mb2239 from Mycobacterium bovis (strain ATCC BAA-935 / AF2122/97).